We begin with the raw amino-acid sequence, 428 residues long: Light-independent protochlorophyllide reductase subunit N (428 aa).

Residues C29, C54, and C115 each coordinate [4Fe-4S] cluster.

Belongs to the BchN/ChlN family. As to quaternary structure, protochlorophyllide reductase is composed of three subunits; BchL, BchN and BchB. Forms a heterotetramer of two BchB and two BchN subunits. Requires [4Fe-4S] cluster as cofactor.

The catalysed reaction is chlorophyllide a + oxidized 2[4Fe-4S]-[ferredoxin] + 2 ADP + 2 phosphate = protochlorophyllide a + reduced 2[4Fe-4S]-[ferredoxin] + 2 ATP + 2 H2O. It participates in porphyrin-containing compound metabolism; bacteriochlorophyll biosynthesis (light-independent). Its function is as follows. Component of the dark-operative protochlorophyllide reductase (DPOR) that uses Mg-ATP and reduced ferredoxin to reduce ring D of protochlorophyllide (Pchlide) to form chlorophyllide a (Chlide). This reaction is light-independent. The NB-protein (BchN-BchB) is the catalytic component of the complex. This chain is Light-independent protochlorophyllide reductase subunit N, found in Cereibacter sphaeroides (strain KD131 / KCTC 12085) (Rhodobacter sphaeroides).